The primary structure comprises 96 residues: Glutamyl-tRNA(Gln) amidotransferase subunit C (96 aa).

The protein belongs to the GatC family. As to quaternary structure, heterotrimer of A, B and C subunits.

It carries out the reaction L-glutamyl-tRNA(Gln) + L-glutamine + ATP + H2O = L-glutaminyl-tRNA(Gln) + L-glutamate + ADP + phosphate + H(+). The catalysed reaction is L-aspartyl-tRNA(Asn) + L-glutamine + ATP + H2O = L-asparaginyl-tRNA(Asn) + L-glutamate + ADP + phosphate + 2 H(+). Functionally, allows the formation of correctly charged Asn-tRNA(Asn) or Gln-tRNA(Gln) through the transamidation of misacylated Asp-tRNA(Asn) or Glu-tRNA(Gln) in organisms which lack either or both of asparaginyl-tRNA or glutaminyl-tRNA synthetases. The reaction takes place in the presence of glutamine and ATP through an activated phospho-Asp-tRNA(Asn) or phospho-Glu-tRNA(Gln). In Pseudomonas aeruginosa (strain ATCC 15692 / DSM 22644 / CIP 104116 / JCM 14847 / LMG 12228 / 1C / PRS 101 / PAO1), this protein is Glutamyl-tRNA(Gln) amidotransferase subunit C.